The sequence spans 436 residues: MNALVRRCVARAGLPCIWRGKCYSSGNEPAESNQVTPMLRHLMYKIKSTGPITVAEYMKEVLTNPAKGYYVHQDMLGEKGDFITSPEISQIFGELLGVWFVSEWIASGKSPAFQLVELGPGRGTLTADILRVFSQLGSVLKTCAISIHLVEVSQKLSEIQALTLAEEKVPLERDAESLVYMKGVTKSGIPVSWYRDLKDVPEGYSLYLAHEFFDVLPVHKFQKTPRGWREVFVDVDPQASDKLRFVLAPCATPAEAFIQRDERREHVEVCPDAGVIIQELSQRIASTGGAALIADYGHDGTKTDTLRGFYGHQLHDVLIAPGTADLTADVDFSYLRRMAQGKVASLGPVEQRTFLKNMGIDVRLKVLLDKAGEPSAKQQLLGGYDMLMNPQKMGERFHFFALLPHQRLHGGSQERNACQSKTPSSSVAGFDELVWQ.

A mitochondrion-targeting transit peptide spans 1–41; it reads MNALVRRCVARAGLPCIWRGKCYSSGNEPAESNQVTPMLRH. The interval 411–436 is disordered; that stretch reads GSQERNACQSKTPSSSVAGFDELVWQ. Positions 413-427 are enriched in polar residues; the sequence is QERNACQSKTPSSSV.

This sequence belongs to the NDUFAF7 family. In terms of assembly, interacts with NDUFS2.

It localises to the mitochondrion. The catalysed reaction is L-arginyl-[protein] + 2 S-adenosyl-L-methionine = N(omega),N(omega)'-dimethyl-L-arginyl-[protein] + 2 S-adenosyl-L-homocysteine + 2 H(+). Functionally, arginine methyltransferase involved in the assembly or stability of mitochondrial NADH:ubiquinone oxidoreductase complex (complex I). Acts by mediating symmetric dimethylation of 'Arg-118' of NDUFS2 after it assembles into the complex I, stabilizing the early intermediate complex. This is Protein arginine methyltransferase NDUFAF7, mitochondrial from Mus musculus (Mouse).